Consider the following 516-residue polypeptide: Cytochrome P450 6d1 (516 aa).

Position 461 (C461) interacts with heme.

The protein belongs to the cytochrome P450 family. Requires heme as cofactor.

It localises to the endoplasmic reticulum membrane. The protein resides in the microsome membrane. Metabolizes pyrethroid insecticides and other xenobiotics. The protein is Cytochrome P450 6d1 (CYP6D1) of Musca domestica (House fly).